Reading from the N-terminus, the 292-residue chain is Protein sarah (292 aa).

The segment covering 1–51 (MSDAAKSNNNASADAPDPTTPDATGEADAANAATPTTPRGNHNNNNSANGR) has biased composition (low complexity). A disordered region spans residues 1 to 111 (MSDAAKSNNN…TEPEVDADSF (111 aa)). 3 positions are modified to phosphoserine: Ser67, Ser72, and Ser100. The span at 98–111 (VDSDTEPEVDADSF) shows a compositional bias: acidic residues. Thr102 and Thr196 each carry phosphothreonine. Phosphoserine occurs at positions 215 and 219. Thr246 is subject to Phosphothreonine.

It belongs to the RCAN family. Interacts with Pp2B-14D, CanA-14F and CanB2. Phosphorylation at Ser-215 and Ser-219 is essential for calcineurin activation and completion of female meiosis. Sgg is required for phosphorylation of Ser-215 in activated eggs. Ser-100, Thr-102 and Ser-219 are highly phosphorylated in both ovaries and activated eggs; however, phosphorylation at Ser-100 or Thr-102 is not required for sra function in completion of female meiosis. In terms of tissue distribution, expressed in central nervous system of the third instar larvae, with a relatively intense signal in the brain and weak signals in the ventral ganglion. Relatively low, but ubiquitous expression level is observed in leg and wing imaginal disks, no signal is detected in the eye-antennal disks. Expressed in all neurons in the adult brain.

Functionally, required for elongation of meiosis I spindle. Critical for ovulation, meiotic progression in oocytes and female courtship behavior, including their postmating changes. Regulates female meiosis by controlling calcineurin activity in the germline. Has a role in calcium signaling during egg activation; bcd mRNA polyadenylation and translation in the oocyte. This Drosophila melanogaster (Fruit fly) protein is Protein sarah (sra).